The chain runs to 379 residues: Homoserine O-acetyltransferase (379 aa).

The AB hydrolase-1 domain maps to 45–355 (NAILILHALT…PHGHDAFLIE (311 aa)). The Nucleophile role is filled by Ser-151. A substrate-binding site is contributed by Arg-220. Catalysis depends on residues Asp-316 and His-349. Asp-350 is a substrate binding site.

This sequence belongs to the AB hydrolase superfamily. MetX family. In terms of assembly, homodimer.

The protein localises to the cytoplasm. The enzyme catalyses L-homoserine + acetyl-CoA = O-acetyl-L-homoserine + CoA. It functions in the pathway amino-acid biosynthesis; L-methionine biosynthesis via de novo pathway; O-acetyl-L-homoserine from L-homoserine: step 1/1. Functionally, transfers an acetyl group from acetyl-CoA to L-homoserine, forming acetyl-L-homoserine. This Carboxydothermus hydrogenoformans (strain ATCC BAA-161 / DSM 6008 / Z-2901) protein is Homoserine O-acetyltransferase.